Reading from the N-terminus, the 388-residue chain is MNLHEYQAKQLFAEYGLPVSTGYACDTPEEAAAAAEKIGGDMWVVKTQVHAGGRGKAGGVKLVKTIDEVKAFAANWLGKNLVTYQTDEKGQPVAKILVESCTDIANELYLGAVVDRASRKVVFMASTEGGVEIETVAEETPELIHKAEIDPLVGPQAYQARELGFKLGLNPVQMKQFVKIFMGLGKMFTDFDFALLEINPLVITDEGNLHCLDGKIGIDGNALYRQPKIREFHDPSQEDSREAHAASFELNYVALDGNVGCMVNGAGLAMGTMDIVNLHGGKPANFLDVGGGATKERVSEAFKIILSDDNVKAVLVNIFGGIVRCDMIAEGIIGAVKEVGVNVPVVVRLEGTNAELGREVLKNSGLDIIAAESLTDAAEKVVAAAEGK.

An ATP-grasp domain is found at K9–H244. Residues K46, G53–G55, E99, T102, and E107 each bind ATP. Mg(2+) is bound by residues N199 and D213. Substrate-binding positions include N264 and G321 to V323.

This sequence belongs to the succinate/malate CoA ligase beta subunit family. Heterotetramer of two alpha and two beta subunits. Mg(2+) serves as cofactor.

The catalysed reaction is succinate + ATP + CoA = succinyl-CoA + ADP + phosphate. It carries out the reaction GTP + succinate + CoA = succinyl-CoA + GDP + phosphate. The protein operates within carbohydrate metabolism; tricarboxylic acid cycle; succinate from succinyl-CoA (ligase route): step 1/1. Its function is as follows. Succinyl-CoA synthetase functions in the citric acid cycle (TCA), coupling the hydrolysis of succinyl-CoA to the synthesis of either ATP or GTP and thus represents the only step of substrate-level phosphorylation in the TCA. The beta subunit provides nucleotide specificity of the enzyme and binds the substrate succinate, while the binding sites for coenzyme A and phosphate are found in the alpha subunit. In Pseudoalteromonas translucida (strain TAC 125), this protein is Succinate--CoA ligase [ADP-forming] subunit beta.